The chain runs to 342 residues: Inositol 2-dehydrogenase 2 (342 aa).

This sequence belongs to the Gfo/Idh/MocA family. As to quaternary structure, homotetramer.

The catalysed reaction is myo-inositol + NAD(+) = scyllo-inosose + NADH + H(+). Functionally, involved in the oxidation of myo-inositol (MI) to 2-keto-myo-inositol (2KMI or 2-inosose). In Mycolicibacterium vanbaalenii (strain DSM 7251 / JCM 13017 / BCRC 16820 / KCTC 9966 / NRRL B-24157 / PYR-1) (Mycobacterium vanbaalenii), this protein is Inositol 2-dehydrogenase 2.